Consider the following 685-residue polypeptide: Mannan-binding lectin serine protease 2 (685 aa).

Residues 1 to 19 form the signal peptide; the sequence is MRLLIFLGLLWSLVATLLG. In terms of domain architecture, CUB 1 spans 20–137; that stretch reads SKWPEPVFGR…TGFEAFYAAE (118 aa). Ca(2+) contacts are provided by Glu-67 and Asp-75. Cys-72 and Cys-90 are oxidised to a cystine. A glycan (N-linked (GlcNAc...) asparagine) is linked at Asn-103. Asp-120, Ser-122, Asn-123, Asp-138, and Glu-141 together coordinate Ca(2+). Positions 138–181 constitute an EGF-like; calcium-binding domain; it reads DVDECRVSLGDSVPCDHYCHNYLGGYYCSCRAGYVLHQNKHTCS. 5 cysteine pairs are disulfide-bonded: Cys-142–Cys-156, Cys-152–Cys-165, Cys-167–Cys-180, Cys-184–Cys-211, and Cys-241–Cys-259. Residues Asn-158 and Gly-162 each contribute to the Ca(2+) site. The residue at position 158 (Asn-158) is a (3R)-3-hydroxyasparagine. One can recognise a CUB 2 domain in the interval 184-296; the sequence is CSGQVFTGRS…TGWKIHYTST (113 aa). N-linked (GlcNAc...) asparagine glycans are attached at residues Asn-285 and Asn-308. Sushi domains are found at residues 298 to 363 and 364 to 431; these read RPCP…ECSI and IDCG…VCEP. Intrachain disulfides connect Cys-300/Cys-348, Cys-328/Cys-361, Cys-366/Cys-411, Cys-396/Cys-429, Cys-433/Cys-552, Cys-598/Cys-617, and Cys-628/Cys-659. The Peptidase S1 domain maps to 444 to 683; sequence IVGGQPAKPG…YIPWIENIIS (240 aa). Residues His-483 and Asp-532 each act as charge relay system in the active site. An N-linked (GlcNAc...) asparagine glycan is attached at Asn-545. The active-site Charge relay system is Ser-632. Asn-641 carries an N-linked (GlcNAc...) asparagine glycan.

It belongs to the peptidase S1 family. Homodimer; disulfide-linked. Binds MBL2. Isoform 2 binds to MASP1. Binds SERPING1. Post-translationally, the iron and 2-oxoglutarate dependent 3-hydroxylation of aspartate and asparagine is (R) stereospecific within EGF domains. As to expression, plasma.

The protein localises to the secreted. It catalyses the reaction Selective cleavage after Arg-223 in complement component C2 (-Ser-Leu-Gly-Arg-|-Lys-Ile-Gln-Ile) and after Arg-76 in complement component C4 (-Gly-Leu-Gln-Arg-|-Ala-Leu-Glu-Ile).. Functionally, serum protease that plays an important role in the activation of the complement system via mannose-binding lectin. After activation by auto-catalytic cleavage it cleaves C2 and C4, leading to their activation and to the formation of C3 convertase. This is Mannan-binding lectin serine protease 2 (Masp2) from Mus musculus (Mouse).